The sequence spans 312 residues: Porphobilinogen deaminase (312 aa).

An S-(dipyrrolylmethanemethyl)cysteine modification is found at cysteine 241.

It belongs to the HMBS family. Monomer. Dipyrromethane is required as a cofactor.

It catalyses the reaction 4 porphobilinogen + H2O = hydroxymethylbilane + 4 NH4(+). The protein operates within porphyrin-containing compound metabolism; protoporphyrin-IX biosynthesis; coproporphyrinogen-III from 5-aminolevulinate: step 2/4. It functions in the pathway porphyrin-containing compound metabolism; chlorophyll biosynthesis. In terms of biological role, tetrapolymerization of the monopyrrole PBG into the hydroxymethylbilane pre-uroporphyrinogen in several discrete steps. This is Porphobilinogen deaminase (hemC) from Chlorobaculum parvum (strain DSM 263 / NCIMB 8327) (Chlorobium vibrioforme subsp. thiosulfatophilum).